Consider the following 184-residue polypeptide: uncharacterized protein (184 aa).

Residues D130 to N149 form a disordered region.

The protein localises to the virion. This is an uncharacterized protein from Acanthamoeba polyphaga (Amoeba).